We begin with the raw amino-acid sequence, 96 residues long: Putative pterin-4-alpha-carbinolamine dehydratase (96 aa).

Belongs to the pterin-4-alpha-carbinolamine dehydratase family.

It carries out the reaction (4aS,6R)-4a-hydroxy-L-erythro-5,6,7,8-tetrahydrobiopterin = (6R)-L-erythro-6,7-dihydrobiopterin + H2O. The polypeptide is Putative pterin-4-alpha-carbinolamine dehydratase (Rhodospirillum rubrum (strain ATCC 11170 / ATH 1.1.1 / DSM 467 / LMG 4362 / NCIMB 8255 / S1)).